The following is a 300-amino-acid chain: Free fatty acid receptor 1 (300 aa).

Residues Met1–Phe8 are Extracellular-facing. A helical membrane pass occupies residues Phe9–Val31. The Cytoplasmic segment spans residues Ala32 to Asn41. A helical transmembrane segment spans residues Leu42–Val64. Residues Glu65 to Cys79 are Extracellular-facing. Residues Cys79 and Cys170 are joined by a disulfide bond. The chain crosses the membrane as a helical span at residues Pro80–Ser101. Topologically, residues Ala102–Arg121 are cytoplasmic. A helical membrane pass occupies residues Tyr122–Leu142. Topologically, residues Gly143–Ser178 are extracellular. N-linked (GlcNAc...) asparagine glycosylation occurs at Asn152. The chain crosses the membrane as a helical span at residues Ala179–Phe200. Residues Cys201–Ala223 lie on the Cytoplasmic side of the membrane. A helical membrane pass occupies residues Trp224–Phe248. Residues Val249–Ser256 are Extracellular-facing. Residues Trp257–Leu279 traverse the membrane as a helical segment. The Cytoplasmic portion of the chain corresponds to Gly280–Lys300.

It belongs to the G-protein coupled receptor 1 family.

The protein localises to the cell membrane. Functionally, G-protein coupled receptor for medium and long chain saturated and unsaturated fatty acids that plays an important role in glucose homeostasis. Fatty acid binding increases glucose-stimulated insulin secretion, and may also enhance the secretion of glucagon-like peptide 1 (GLP-1). May also play a role in bone homeostasis; receptor signaling activates pathways that inhibit osteoclast differentiation. Ligand binding leads to a conformation change that triggers signaling via G-proteins that activate phospholipase C, leading to an increase of the intracellular calcium concentration. Seems to act through a G(q) and G(i)-mediated pathway. Mediates the anti-inflammatory effects of omega-3 polyunsaturated fatty acids (PUFAs) via inhibition of NLRP3 inflammasome activation. This is Free fatty acid receptor 1 (FFAR1) from Mesocricetus auratus (Golden hamster).